The chain runs to 179 residues: MIFYLHGFDATSPGNHEKMRQLQFIDPDVRLVSYSTLHPKHDMQHLLKEVAKQMKHSDDPAPLMVGVGLGAYWAERIGFLNGLKSVLINPNLHPEENMQGKIDRPEEYADIANKCVSQFREKNTHKAMCIFSVNDEMFDNQQLASELSAYYSIDWDDVQPHKFHQLAAHLPKIKAFKLA.

This sequence belongs to the UPF0227 family.

This Shewanella baltica (strain OS185) protein is UPF0227 protein Shew185_2404.